A 114-amino-acid polypeptide reads, in one-letter code: Iron-sulfur cluster insertion protein ErpA (114 aa).

The iron-sulfur cluster site is built by Cys42, Cys106, and Cys108.

It belongs to the HesB/IscA family. In terms of assembly, homodimer. It depends on iron-sulfur cluster as a cofactor.

Functionally, required for insertion of 4Fe-4S clusters for at least IspG. The sequence is that of Iron-sulfur cluster insertion protein ErpA from Buchnera aphidicola subsp. Acyrthosiphon pisum (strain APS) (Acyrthosiphon pisum symbiotic bacterium).